The primary structure comprises 102 residues: Biotrophy-associated secreted protein 4 (102 aa).

An N-terminal signal peptide occupies residues 1-21 (MQLSFSAIAILLAFAVNHATA). N-linked (GlcNAc...) asparagine glycosylation occurs at N36.

The protein resides in the secreted. Secreted effector involved in biotrophic colonization of plant cells. Participates in transition from the biotrophic to the necrotrophic phase of Magnaporthe oryzae. Elicits rice basic defense responses during the early stage of interaction and promotes cell death in the late stage of compatible interaction. The sequence is that of Biotrophy-associated secreted protein 4 from Pyricularia oryzae (strain 70-15 / ATCC MYA-4617 / FGSC 8958) (Rice blast fungus).